Here is a 299-residue protein sequence, read N- to C-terminus: Taste receptor type 2 member 16 (299 aa).

At methionine 1–glutamine 5 the chain is on the extracellular side. A helical transmembrane segment spans residues valine 6–cysteine 26. Residues threonine 27–threonine 47 are Cytoplasmic-facing. A helical membrane pass occupies residues isoleucine 48 to phenylalanine 68. Residues glycine 69 to serine 82 are Extracellular-facing. A helical transmembrane segment spans residues valine 83–tyrosine 103. Residues cysteine 104 to leucine 125 are Cytoplasmic-facing. Residues valine 126–valine 146 traverse the membrane as a helical segment. Residues lysine 147 to methionine 183 lie on the Extracellular side of the membrane. N-linked (GlcNAc...) asparagine glycosylation occurs at asparagine 163. The chain crosses the membrane as a helical span at residues isoleucine 184–leucine 204. Topologically, residues valine 205 to threonine 233 are cytoplasmic. A helical membrane pass occupies residues phenylalanine 234–phenylalanine 254. The Extracellular segment spans residues aspartate 255 to serine 258. The helical transmembrane segment at tryptophan 259 to methionine 279 threads the bilayer. The Cytoplasmic portion of the chain corresponds to methionine 280–serine 299.

Belongs to the G-protein coupled receptor T2R family. Interacts with RTP3 and RTP4.

It is found in the cell membrane. Gustducin-coupled receptor implicated in the perception of bitter compounds in the oral cavity and the gastrointestinal tract. Signals through PLCB2 and the calcium-regulated cation channel TRPM5. The sequence is that of Taste receptor type 2 member 16 (Tas2r16) from Mus musculus (Mouse).